We begin with the raw amino-acid sequence, 68 residues long: Protein SlyX homolog (68 aa).

The protein belongs to the SlyX family.

The sequence is that of Protein SlyX homolog from Pseudomonas syringae pv. tomato (strain ATCC BAA-871 / DC3000).